Here is a 467-residue protein sequence, read N- to C-terminus: ATP synthase subunit beta (467 aa).

153–160 provides a ligand contact to ATP; that stretch reads GGAGVGKT.

The protein belongs to the ATPase alpha/beta chains family. In terms of assembly, F-type ATPases have 2 components, CF(1) - the catalytic core - and CF(0) - the membrane proton channel. CF(1) has five subunits: alpha(3), beta(3), gamma(1), delta(1), epsilon(1). CF(0) has three main subunits: a(1), b(2) and c(9-12). The alpha and beta chains form an alternating ring which encloses part of the gamma chain. CF(1) is attached to CF(0) by a central stalk formed by the gamma and epsilon chains, while a peripheral stalk is formed by the delta and b chains.

It localises to the cell membrane. It catalyses the reaction ATP + H2O + 4 H(+)(in) = ADP + phosphate + 5 H(+)(out). Produces ATP from ADP in the presence of a proton gradient across the membrane. The catalytic sites are hosted primarily by the beta subunits. The sequence is that of ATP synthase subunit beta from Lactiplantibacillus plantarum (strain ATCC BAA-793 / NCIMB 8826 / WCFS1) (Lactobacillus plantarum).